The sequence spans 1040 residues: Multidrug resistance protein MdtB (1040 aa).

The next 12 helical transmembrane spans lie at 16–36, 347–367, 369–389, 396–416, 440–460, 472–492, 537–557, 863–883, 888–908, 911–931, 968–988, and 998–1018; these read FIMRPVATTLLMVAILLAGII, LMMAIALVVMIIYLFLRNIPA, IIPGVAVPLSLIGTFAVMVFL, LTLMALTIATGFVVDDAIVVI, IGFTIISLTFSLIAVLIPLLF, FAITLAVAILISAVVSLTLTP, WLTLSVALSTLLLSVLLWVFI, LGSTVWLIVAAVVAMYIVLGI, FIHPITILSTLPTAGVGALLA, IAGSELDVIAIIGIILLIGIV, ILMTTLAALLGALPLMLSTGV, and IGMVGGLIVSQVLTLFTTPVI.

Belongs to the resistance-nodulation-cell division (RND) (TC 2.A.6) family. MdtB subfamily. In terms of assembly, part of a tripartite efflux system composed of MdtA, MdtB and MdtC. MdtB forms a heteromultimer with MdtC.

It is found in the cell inner membrane. Functionally, the MdtABC tripartite complex confers resistance against novobiocin and deoxycholate. This is Multidrug resistance protein MdtB from Escherichia coli O139:H28 (strain E24377A / ETEC).